Reading from the N-terminus, the 483-residue chain is Altronate oxidoreductase (483 aa).

An NAD(+)-binding site is contributed by 18-29 (IIQFGEGNFLRA).

Belongs to the mannitol dehydrogenase family. UxaB subfamily.

The catalysed reaction is D-altronate + NAD(+) = keto-D-tagaturonate + NADH + H(+). The protein operates within carbohydrate metabolism; pentose and glucuronate interconversion. The chain is Altronate oxidoreductase from Yersinia pestis.